A 223-amino-acid polypeptide reads, in one-letter code: Nitrate reductase gamma chain (223 aa).

A helical membrane pass occupies residues 2-27 (SGQILWGIMPYIVLTIFIGGHIYRYQ). At 28–45 (HDQFGWTAKSSELLEKKK) the chain is on the cytoplasmic side. The helical transmembrane segment at 46 to 68 (LAAGSTLFHWGLLCVVGGHVMGI) threads the bilayer. Heme b is bound by residues His54 and His64. The Extracellular segment spans residues 69 to 81 (LIPEGVYASLGIS). A helical membrane pass occupies residues 82 to 111 (EHMYHKMAIGAGLPAGIAACTGLVILTYRR). Residues 112 to 123 (LFDKRIRKTSSP) lie on the Cytoplasmic side of the membrane. A helical membrane pass occupies residues 124-147 (SDILTLLLLLFMMLSGVAATFLNI). Residues 148 to 180 (DSKGFDYRTTVGPWFREIVLFRPDASLMESVPL) lie on the Extracellular side of the membrane. Residues 181–196 (WFKFHIVIGYVVFILW) traverse the membrane as a helical segment. His185 and His203 together coordinate heme b. Topologically, residues 197 to 223 (PFTRLVHVFSLPLKYLTRSYVVYRKRS) are cytoplasmic.

The cofactor is heme.

It is found in the cell membrane. The enzyme catalyses nitrate + a quinol = a quinone + nitrite + H2O. The gamma chain is a membrane-embedded heme-iron unit resembling cytochrome b, which transfers electrons from quinones to the beta subunit. This is Nitrate reductase gamma chain (narI) from Bacillus subtilis (strain 168).